Here is a 1152-residue protein sequence, read N- to C-terminus: Nucleolar protein 6 (1152 aa).

Disordered regions lie at residues 1–30 (MPSA…DPEV) and 36–55 (EGMD…EPPA). Ser65 carries the phosphoserine modification. Positions 92–128 (LLRLQVEELLKEVRLSEKKKERIDNFLKEVTKRIQKV) form a coiled coil. Ser292 and Ser817 each carry phosphoserine.

This sequence belongs to the NRAP family. Part of the small subunit (SSU) processome, composed of more than 70 proteins and the RNA chaperone small nucleolar RNA (snoRNA) U3. Interacts with RRP7A; required for NOL6 localization to nucleolus. In terms of tissue distribution, ubiquitously expressed.

The protein localises to the nucleus. It localises to the nucleolus. It is found in the chromosome. Functionally, part of the small subunit (SSU) processome, first precursor of the small eukaryotic ribosomal subunit. During the assembly of the SSU processome in the nucleolus, many ribosome biogenesis factors, an RNA chaperone and ribosomal proteins associate with the nascent pre-rRNA and work in concert to generate RNA folding, modifications, rearrangements and cleavage as well as targeted degradation of pre-ribosomal RNA by the RNA exosome. The protein is Nucleolar protein 6 (Nol6) of Mus musculus (Mouse).